A 226-amino-acid chain; its full sequence is UPF0502 protein Daci_5373 (226 aa).

The protein belongs to the UPF0502 family.

This is UPF0502 protein Daci_5373 from Delftia acidovorans (strain DSM 14801 / SPH-1).